The following is a 232-amino-acid chain: 5'-methylthioadenosine/S-adenosylhomocysteine nucleosidase (232 aa).

Catalysis depends on glutamate 12, which acts as the Proton acceptor. Substrate-binding positions include glycine 78, isoleucine 152, and 173 to 174; that span reads ME. Aspartate 197 (proton donor) is an active-site residue.

The protein belongs to the PNP/UDP phosphorylase family. MtnN subfamily. Homodimer.

It catalyses the reaction S-adenosyl-L-homocysteine + H2O = S-(5-deoxy-D-ribos-5-yl)-L-homocysteine + adenine. The enzyme catalyses S-methyl-5'-thioadenosine + H2O = 5-(methylsulfanyl)-D-ribose + adenine. The catalysed reaction is 5'-deoxyadenosine + H2O = 5-deoxy-D-ribose + adenine. It participates in amino-acid biosynthesis; L-methionine biosynthesis via salvage pathway; S-methyl-5-thio-alpha-D-ribose 1-phosphate from S-methyl-5'-thioadenosine (hydrolase route): step 1/2. In terms of biological role, catalyzes the irreversible cleavage of the glycosidic bond in both 5'-methylthioadenosine (MTA) and S-adenosylhomocysteine (SAH/AdoHcy) to adenine and the corresponding thioribose, 5'-methylthioribose and S-ribosylhomocysteine, respectively. Also cleaves 5'-deoxyadenosine, a toxic by-product of radical S-adenosylmethionine (SAM) enzymes, into 5-deoxyribose and adenine. Thus, is required for in vivo function of the radical SAM enzymes biotin synthase and lipoic acid synthase, that are inhibited by 5'-deoxyadenosine accumulation. The sequence is that of 5'-methylthioadenosine/S-adenosylhomocysteine nucleosidase from Enterobacter sp. (strain 638).